The chain runs to 160 residues: Complexin-4 (160 aa).

The segment at 14–44 (KNLGFGGGSEEKKEEGGTSDPAAAKGMTREE) is disordered. Residue C157 is modified to Cysteine methyl ester. The S-farnesyl cysteine moiety is linked to residue C157. Residues 158–160 (SVM) constitute a propeptide, removed in mature form.

The protein belongs to the complexin/synaphin family. As to quaternary structure, weakly binds to the SNARE core complex containing SNAP25, VAMP2 and STX1A. Post-translationally, farnesylation mediates presynaptic targeting and is important for function in neurotransmitter release. In terms of tissue distribution, present specifically in the retina (at protein level). Expressed in the outer nuclear layer of the retina (at protein level). Strongly expressed at rod photoreceptor ribbon synapses (at protein level). Not expressed at conventional amacrine cell synapses, nor at cone photoreceptor ribbon synapses (at protein level). Weakly expressed at cone photoreceptor synaptic terminals (at protein level). Not expressed in the brain (at protein level).

It is found in the synapse. It localises to the cell membrane. Functionally, complexin that regulates SNARE protein complex-mediated synaptic vesicle fusion. Required for the maintenance of synaptic ultrastructure in the adult retina. Positively regulates synaptic transmission through synaptic vesicle availability and exocytosis of neurotransmitters at photoreceptor ribbon synapses in the retina. Suppresses tonic photoreceptor activity and baseline 'noise' by suppression of Ca(2+) vesicle tonic release and the facilitation of evoked synchronous and asynchronous Ca(2+) vesicle release. The polypeptide is Complexin-4 (Cplx4) (Mus musculus (Mouse)).